The sequence spans 341 residues: Putative ubiquitin-like-specific protease 1B (341 aa).

Active-site residues include H231, D248, and C300.

It belongs to the peptidase C48 family.

Its function is as follows. Protease that catalyzes two essential functions in the SUMO pathway: processing of full-length SUMOs to their mature forms and deconjugation of SUMO from targeted proteins. The sequence is that of Putative ubiquitin-like-specific protease 1B (ULP1B) from Arabidopsis thaliana (Mouse-ear cress).